The chain runs to 246 residues: Isoprenyl transferase 1 (246 aa).

Residue Asp-19 is part of the active site. Asp-19 serves as a coordination point for Mg(2+). Residues 20–23 (GNGR), Trp-24, Arg-32, His-36, and 64–66 (STD) contribute to the substrate site. Residue Asn-67 is the Proton acceptor of the active site. Substrate-binding positions include Trp-68, Arg-70, Arg-180, and 186-188 (RLS). Residue Glu-199 coordinates Mg(2+).

Belongs to the UPP synthase family. As to quaternary structure, homodimer. It depends on Mg(2+) as a cofactor.

Functionally, catalyzes the condensation of isopentenyl diphosphate (IPP) with allylic pyrophosphates generating different type of terpenoids. In Bradyrhizobium diazoefficiens (strain JCM 10833 / BCRC 13528 / IAM 13628 / NBRC 14792 / USDA 110), this protein is Isoprenyl transferase 1.